The chain runs to 261 residues: Mite allergen Der p 3 (261 aa).

A signal peptide spans 1 to 18 (MIIYNILIVLLLAINTLA). Residues 19 to 29 (NPILPASPNAT) constitute a propeptide that is removed on maturation. The Peptidase S1 domain occupies 30–260 (IVGGEKALAG…FIDWIESKRS (231 aa)). A disulfide bridge connects residues C54 and C70. Active-site charge relay system residues include H69 and D114. 2 cysteine pairs are disulfide-bonded: C181–C198 and C210–C236. The Charge relay system role is filled by S214.

Belongs to the peptidase S1 family.

Its subcellular location is the secreted. This is Mite allergen Der p 3 (DERP3) from Dermatophagoides pteronyssinus (European house dust mite).